The chain runs to 388 residues: Splicing factor 3B subunit 4 (388 aa).

RRM domains are found at residues 13–91 and 100–179; these read ATIY…KASA and ANIF…YAFK. The interval 244–388 is disordered; that stretch reads QPPPLMGMAQ…GMIPPPPPPS (145 aa). 3 stretches are compositionally biased toward pro residues: residues 261–325, 333–355, and 362–388; these read PPVP…PSRF, MPPPPPPGMRYPGGMPPPPPPRY, and MYPPPPPSRPPAPPSGHGMIPPPPPPS.

The protein belongs to the SF3B4 family.

Its subcellular location is the nucleus. Subunit of the splicing factor SF3B required for 'A' complex assembly formed by the stable binding of U2 snRNP to the branchpoint sequence (BPS) in pre-mRNA. Sequence independent binding of SF3A/SF3B complex upstream of the branch site is essential, it may anchor U2 snRNP to the pre-mRNA. May also be involved in the assembly of the 'E' complex. SF3B4 has been found in complex 'B' and 'C' as well. Belongs also to the minor U12-dependent spliceosome, which is involved in the splicing of rare class of nuclear pre-mRNA intron. This Caenorhabditis elegans protein is Splicing factor 3B subunit 4 (sap-49).